We begin with the raw amino-acid sequence, 1038 residues long: Translation initiation factor IF-2 (1038 aa).

Disordered stretches follow at residues Thr-39–Glu-346 and Lys-403–Val-451. Residues Arg-103–Asn-125 are compositionally biased toward polar residues. The span at Pro-157–Lys-176 shows a compositional bias: low complexity. Composition is skewed to basic and acidic residues over residues Ala-178–Pro-197 and Pro-226–Lys-243. A compositionally biased stretch (low complexity) spans Ala-407–Thr-423. The segment covering Asn-431 to Lys-450 has biased composition (basic and acidic residues). A tr-type G domain is found at Arg-532 to Ser-705. Positions Gly-541–Thr-548 are G1. Gly-541 to Thr-548 is a GTP binding site. Residues Gly-566–His-570 form a G2 region. Residues Asp-591 to Gly-594 form a G3 region. Residues Asp-591–His-595 and Asn-645–Asp-648 each bind GTP. The tract at residues Asn-645–Asp-648 is G4. Positions Ser-681–Ile-683 are G5.

Belongs to the TRAFAC class translation factor GTPase superfamily. Classic translation factor GTPase family. IF-2 subfamily.

Its subcellular location is the cytoplasm. Functionally, one of the essential components for the initiation of protein synthesis. Protects formylmethionyl-tRNA from spontaneous hydrolysis and promotes its binding to the 30S ribosomal subunits. Also involved in the hydrolysis of GTP during the formation of the 70S ribosomal complex. This Trichormus variabilis (strain ATCC 29413 / PCC 7937) (Anabaena variabilis) protein is Translation initiation factor IF-2.